Consider the following 494-residue polypeptide: Catalase (494 aa).

Active-site residues include H65 and N138. Residue Y348 participates in heme binding.

Belongs to the catalase family. Homotetramer. Heme serves as cofactor.

The protein resides in the cytoplasm. It is found in the cytosol. It localises to the peroxisome matrix. It carries out the reaction 2 H2O2 = O2 + 2 H2O. Functionally, catalyzes the degradation of hydrogen peroxide (H(2)O(2)) generated by peroxisomal oxidases to water and oxygen, thereby protecting cells from the toxic effects of hydrogen peroxide. The sequence is that of Catalase from Pisum sativum (Garden pea).